Reading from the N-terminus, the 149-residue chain is Large ribosomal subunit protein uL13 (149 aa).

It belongs to the universal ribosomal protein uL13 family. Part of the 50S ribosomal subunit.

Functionally, this protein is one of the early assembly proteins of the 50S ribosomal subunit, although it is not seen to bind rRNA by itself. It is important during the early stages of 50S assembly. This is Large ribosomal subunit protein uL13 from Chlorobium phaeobacteroides (strain DSM 266 / SMG 266 / 2430).